The primary structure comprises 329 residues: Ribosomal RNA small subunit methyltransferase H (329 aa).

Residues 47–49 (GGH), aspartate 67, phenylalanine 93, aspartate 115, and glutamine 122 contribute to the S-adenosyl-L-methionine site.

Belongs to the methyltransferase superfamily. RsmH family.

The protein localises to the cytoplasm. The catalysed reaction is cytidine(1402) in 16S rRNA + S-adenosyl-L-methionine = N(4)-methylcytidine(1402) in 16S rRNA + S-adenosyl-L-homocysteine + H(+). Functionally, specifically methylates the N4 position of cytidine in position 1402 (C1402) of 16S rRNA. The protein is Ribosomal RNA small subunit methyltransferase H of Blochmanniella pennsylvanica (strain BPEN).